The primary structure comprises 251 residues: Flap endonuclease Xni (251 aa).

Asp104 lines the Mg(2+) pocket. A 5'-3' exonuclease domain is found at 160–249 (VQPQQLPDYW…IDGNLQQLRL (90 aa)). K(+) is bound by residues Leu171, Ala172, Pro180, Val182, and Ile185. Positions 184–189 (GIGPKS) are interaction with DNA.

It belongs to the Xni family. Mg(2+) is required as a cofactor. Requires K(+) as cofactor.

In terms of biological role, has flap endonuclease activity. During DNA replication, flap endonucleases cleave the 5'-overhanging flap structure that is generated by displacement synthesis when DNA polymerase encounters the 5'-end of a downstream Okazaki fragment. The sequence is that of Flap endonuclease Xni from Escherichia coli O6:K15:H31 (strain 536 / UPEC).